We begin with the raw amino-acid sequence, 300 residues long: 33 kDa chaperonin (300 aa).

2 cysteine pairs are disulfide-bonded: C247–C249 and C280–C283.

It belongs to the HSP33 family. Post-translationally, under oxidizing conditions two disulfide bonds are formed involving the reactive cysteines. Under reducing conditions zinc is bound to the reactive cysteines and the protein is inactive.

It localises to the cytoplasm. Redox regulated molecular chaperone. Protects both thermally unfolding and oxidatively damaged proteins from irreversible aggregation. Plays an important role in the bacterial defense system toward oxidative stress. The protein is 33 kDa chaperonin of Prochlorococcus marinus (strain MIT 9312).